We begin with the raw amino-acid sequence, 122 residues long: Large ribosomal subunit protein uL14 (122 aa).

The protein belongs to the universal ribosomal protein uL14 family. In terms of assembly, part of the 50S ribosomal subunit. Forms a cluster with proteins L3 and L19. In the 70S ribosome, L14 and L19 interact and together make contacts with the 16S rRNA in bridges B5 and B8.

In terms of biological role, binds to 23S rRNA. Forms part of two intersubunit bridges in the 70S ribosome. In Methylobacillus flagellatus (strain ATCC 51484 / DSM 6875 / VKM B-1610 / KT), this protein is Large ribosomal subunit protein uL14.